The sequence spans 128 residues: Large-conductance mechanosensitive channel (128 aa).

Helical transmembrane passes span 10–30 and 76–96; these read FAMR…SAFG and GLFI…FMMI.

Belongs to the MscL family. As to quaternary structure, homopentamer.

Its subcellular location is the cell inner membrane. Its function is as follows. Channel that opens in response to stretch forces in the membrane lipid bilayer. May participate in the regulation of osmotic pressure changes within the cell. The protein is Large-conductance mechanosensitive channel of Haemophilus influenzae (strain 86-028NP).